Consider the following 429-residue polypeptide: Glutamate dehydrogenase B (429 aa).

The interval 1–20 is disordered; the sequence is MAQTPPPESAPSTDSEPETA. Lys-119 is a catalytic residue.

This sequence belongs to the Glu/Leu/Phe/Val dehydrogenases family. As to quaternary structure, homohexamer.

This is Glutamate dehydrogenase B (gdhB) from Halobacterium salinarum (strain ATCC 700922 / JCM 11081 / NRC-1) (Halobacterium halobium).